The sequence spans 419 residues: Cytosine permease (419 aa).

Topologically, residues 1–19 are cytoplasmic; it reads MSQDNNFSQGPVPQSARKG. Residues 20 to 39 traverse the membrane as a helical segment; it reads VLALTFVMLGLTFFSASMWT. The Periplasmic portion of the chain corresponds to 40–51; it reads GGTLGTGLSYHD. A helical membrane pass occupies residues 52-71; sequence FFLAVLIGNLLLGIYTSFLG. The Cytoplasmic portion of the chain corresponds to 72-100; it reads YIGAKTGLTTHLLARFSFGVKGSWLPSLL. Residues 101-120 form a helical membrane-spanning segment; it reads LGGTQVGWFGVGVAMFAIPV. The Periplasmic segment spans residues 121–127; the sequence is GKATGLD. The chain crosses the membrane as a helical span at residues 128–147; that stretch reads INLLIAVSGLLMTVTVFFGI. The Cytoplasmic portion of the chain corresponds to 148–152; the sequence is SALTV. The chain crosses the membrane as a helical span at residues 153 to 172; it reads LSVIAVPAIACLGGYSVWLA. Over 173–192 the chain is Periplasmic; sequence VNGMGGLDALKAVVPAQPLD. The chain crosses the membrane as a helical span at residues 193–212; it reads FNVALALVVGSFISAGTLTA. At 213–221 the chain is on the cytoplasmic side; sequence DFVRFGRNA. Residues 222-242 traverse the membrane as a helical segment; it reads KLAVLVAMVAFFLGNSLMFIF. The Periplasmic portion of the chain corresponds to 243–257; that stretch reads GAAGAAALGMADISD. A helical transmembrane segment spans residues 258–277; it reads VMIAQGLLLPAIVVLGLNIW. Topologically, residues 278–300 are cytoplasmic; it reads TTNDNALYASGLGFANITGMSSK. A helical transmembrane segment spans residues 301 to 320; the sequence is TLSVINGIIGTVCALWLYNN. Residue F321 is a topological domain, periplasmic. Residues 322-341 traverse the membrane as a helical segment; sequence VGWLTFLSAAIPPVGGVIIA. Topologically, residues 342–358 are cytoplasmic; it reads DYLMNRRRYEHFATTRM. Residues 359-378 traverse the membrane as a helical segment; that stretch reads MSVNWVAILAVALGIAAGHW. Residues 379–380 lie on the Periplasmic side of the membrane; sequence LP. Residues 381-400 form a helical membrane-spanning segment; sequence GIVPVNAVLGGALSYLILNP. Residues 401-419 are Cytoplasmic-facing; sequence ILNRKTTAAMTHVEANSVE.

The protein belongs to the purine-cytosine permease (2.A.39) family.

It localises to the cell inner membrane. Functionally, required for cytosine transport into the cell. This chain is Cytosine permease (codB), found in Escherichia coli O6:H1 (strain CFT073 / ATCC 700928 / UPEC).